A 616-amino-acid polypeptide reads, in one-letter code: Dihydroxy-acid dehydratase (616 aa).

Mg(2+) is bound at residue Asp-81. Cys-122 serves as a coordination point for [2Fe-2S] cluster. Asp-123 and Lys-124 together coordinate Mg(2+). Lys-124 is modified (N6-carboxylysine). Cys-195 is a binding site for [2Fe-2S] cluster. A Mg(2+)-binding site is contributed by Glu-491. Catalysis depends on Ser-517, which acts as the Proton acceptor.

Belongs to the IlvD/Edd family. As to quaternary structure, homodimer. The cofactor is [2Fe-2S] cluster. Requires Mg(2+) as cofactor.

It carries out the reaction (2R)-2,3-dihydroxy-3-methylbutanoate = 3-methyl-2-oxobutanoate + H2O. The catalysed reaction is (2R,3R)-2,3-dihydroxy-3-methylpentanoate = (S)-3-methyl-2-oxopentanoate + H2O. It functions in the pathway amino-acid biosynthesis; L-isoleucine biosynthesis; L-isoleucine from 2-oxobutanoate: step 3/4. It participates in amino-acid biosynthesis; L-valine biosynthesis; L-valine from pyruvate: step 3/4. In terms of biological role, functions in the biosynthesis of branched-chain amino acids. Catalyzes the dehydration of (2R,3R)-2,3-dihydroxy-3-methylpentanoate (2,3-dihydroxy-3-methylvalerate) into 2-oxo-3-methylpentanoate (2-oxo-3-methylvalerate) and of (2R)-2,3-dihydroxy-3-methylbutanoate (2,3-dihydroxyisovalerate) into 2-oxo-3-methylbutanoate (2-oxoisovalerate), the penultimate precursor to L-isoleucine and L-valine, respectively. This is Dihydroxy-acid dehydratase from Shigella flexneri.